Reading from the N-terminus, the 259-residue chain is Kynurenine formamidase (259 aa).

The HGGXW signature appears at 34-38 (HGGAW). The active-site Nucleophile is serine 103. Catalysis depends on residues aspartate 196 and histidine 228.

The protein belongs to the kynurenine formamidase family. In terms of assembly, homodimer.

It catalyses the reaction N-formyl-L-kynurenine + H2O = L-kynurenine + formate + H(+). The protein operates within amino-acid degradation; L-tryptophan degradation via kynurenine pathway; L-kynurenine from L-tryptophan: step 2/2. Functionally, catalyzes the hydrolysis of N-formyl-L-kynurenine to L-kynurenine, the second step in the kynurenine pathway of tryptophan degradation. Kynurenine may be further oxidized to nicotinic acid, NAD(H) and NADP(H). Required for elimination of toxic metabolites. The polypeptide is Kynurenine formamidase (Meyerozyma guilliermondii (strain ATCC 6260 / CBS 566 / DSM 6381 / JCM 1539 / NBRC 10279 / NRRL Y-324) (Yeast)).